Reading from the N-terminus, the 524-residue chain is Serine/threonine-protein phosphatase 2A 56 kDa regulatory subunit gamma isoform (524 aa).

An N-acetylmethionine modification is found at methionine 1. Positions 472–489 (RKTVSDEARQAQKDPKKE) match the Nuclear localization signal motif. Positions 476 to 524 (SDEARQAQKDPKKERPLARRKSELPQDPHTKKALEAHCRADELVPQDGR) are disordered.

It belongs to the phosphatase 2A regulatory subunit B56 family. PP2A consists of a common heterodimeric core enzyme, composed of PPP2CA a 36 kDa catalytic subunit (subunit C) and PPP2R1A a 65 kDa constant regulatory subunit (PR65 or subunit A), that associates with a variety of regulatory subunits. Proteins that associate with the core dimer include three families of regulatory subunits B (the R2/B/PR55/B55, R3/B''/PR72/PR130/PR59 and R5/B'/B56 families), the 48 kDa variable regulatory subunit, viral proteins, and cell signaling molecules. Interacts with SGO1. Interacts with SGO1; the interaction is direct. May interact with TP53. Interacts with IER3 and/or ERK kinases; regulates ERK dephosphorylation Interacts with CIP2A; this interaction stabilizes CIP2A. As to expression, highly expressed in testis, heart and spleen. Also found in brain and skeletal muscle.

It is found in the nucleus. Its subcellular location is the chromosome. The protein resides in the centromere. Its function is as follows. The B regulatory subunit might modulate substrate selectivity and catalytic activity, and might also direct the localization of the catalytic enzyme to a particular subcellular compartment. The PP2A-PPP2R5C holoenzyme may activate TP53 and play a role in DNA damage-induced inhibition of cell proliferation. PP2A-PPP2R5C may also regulate the ERK signaling pathway through ERK dephosphorylation. This is Serine/threonine-protein phosphatase 2A 56 kDa regulatory subunit gamma isoform (PPP2R5C) from Oryctolagus cuniculus (Rabbit).